We begin with the raw amino-acid sequence, 391 residues long: Fructose-bisphosphate aldolase 3, chloroplastic (391 aa).

A chloroplast-targeting transit peptide spans 1 to 40 (MASASFVKPNTLSSPWIGQRSFAHTSASSSPPPRVSFAIR). R88 serves as a coordination point for substrate. S150 carries the post-translational modification Phosphoserine. K178 lines the substrate pocket. S208 bears the Phosphoserine mark. The active-site Proton acceptor is the E218. K260 acts as the Schiff-base intermediate with dihydroxyacetone-P in catalysis. 302-304 (SGG) contacts substrate. K387 bears the N6,N6,N6-trimethyllysine mark.

This sequence belongs to the class I fructose-bisphosphate aldolase family. Homotetramer. Post-translationally, can be trimethylated at Lys-387 by LSMT-L, but the trimethylation has no effect in vitro. In terms of processing, S-glutathionylated. Expressed in roots, and at low levels in rosettes leaves, cauline leaves, stems and flowers.

The protein localises to the plastid. It localises to the chloroplast. The protein resides in the plastoglobule. The catalysed reaction is beta-D-fructose 1,6-bisphosphate = D-glyceraldehyde 3-phosphate + dihydroxyacetone phosphate. Its pathway is carbohydrate degradation; glycolysis; D-glyceraldehyde 3-phosphate and glycerone phosphate from D-glucose: step 4/4. In terms of biological role, plays a key role in glycolysis and gluconeogenesis. The sequence is that of Fructose-bisphosphate aldolase 3, chloroplastic from Arabidopsis thaliana (Mouse-ear cress).